The sequence spans 163 residues: Probable ribosome biogenesis protein RLP24 (163 aa).

It belongs to the eukaryotic ribosomal protein eL24 family. As to quaternary structure, associated with nucleolar and cytoplasmic pre-60S particles. At the end of biogenesis it dissociates from cytoplasmic pre-60S particles and is likely to be exchanged for its ribosomal homolog, RPL24.

The protein localises to the nucleus. The protein resides in the nucleolus. Functionally, involved in the biogenesis of the 60S ribosomal subunit. Ensures the docking of GTPBP4/NOG1 to pre-60S particles. In Mus musculus (Mouse), this protein is Probable ribosome biogenesis protein RLP24 (Rsl24d1).